Consider the following 106-residue polypeptide: MSLPLFALAALAEIAGCFAFWHVVRAGGSPLWLAPGVLSLVAFAALLTQVEADAAGRAFAAYGGIYILASLGWMWAAEGVRPDRFDALGAAICLAGACVILFAPRG.

4 consecutive transmembrane segments (helical) span residues 4–24 (PLFA…WHVV), 27–47 (GGSP…AALL), 58–78 (AFAA…WAAE), and 84–104 (RFDA…LFAP).

This sequence belongs to the UPF0060 family.

It is found in the cell inner membrane. The polypeptide is UPF0060 membrane protein AZC_0909 (Azorhizobium caulinodans (strain ATCC 43989 / DSM 5975 / JCM 20966 / LMG 6465 / NBRC 14845 / NCIMB 13405 / ORS 571)).